Here is a 515-residue protein sequence, read N- to C-terminus: Adenine DNA glycosylase (515 aa).

Over residues 1–24 (MKKLQASVRSHKKQPANHKRRRTR) the composition is skewed to basic residues. The segment at 1-38 (MKKLQASVRSHKKQPANHKRRRTRALSSSQAKPSSLDG) is disordered. Catalysis depends on glutamate 105, which acts as the Proton donor/acceptor. The [4Fe-4S] cluster site is built by cysteine 261, cysteine 268, cysteine 271, and cysteine 277. In terms of domain architecture, Nudix hydrolase spans 335 to 466 (PREEYSATCV…AMKKVFRMYE (132 aa)). The short motif at 376-398 (VTLEPSEQHQHKALLQELQRWCG) is the Nudix box element. The disordered stretch occupies residues 468-494 (HRQGTRKGSKRSQVCPPSSRKKPSLGQ).

This sequence belongs to the Nth/MutY family. Requires [4Fe-4S] cluster as cofactor. Expressed in heart, lung, liver, intestine, brain and thymus.

The protein localises to the nucleus. Its subcellular location is the mitochondrion. The catalysed reaction is Hydrolyzes free adenine bases from 7,8-dihydro-8-oxoguanine:adenine mismatched double-stranded DNA, leaving an apurinic site.. Functionally, involved in oxidative DNA damage repair. Initiates repair of A*oxoG to C*G by removing the inappropriately paired adenine base from the DNA backbone. Possesses both adenine and 2-OH-A DNA glycosylase activities. The chain is Adenine DNA glycosylase (Mutyh) from Mus musculus (Mouse).